We begin with the raw amino-acid sequence, 1003 residues long: Glycine--tRNA ligase (1003 aa).

The tract at residues 1–310 is glycine--tRNA ligase alpha subunit; it reads MSSQPLTLQA…VTPKKIPTIC (310 aa). Positions 311–1003 are glycine--tRNA ligase beta subunit; that stretch reads QPEDFLLEIG…CFGFYAWDVL (693 aa).

The protein belongs to the class-II aminoacyl-tRNA synthetase family.

It localises to the cytoplasm. It catalyses the reaction tRNA(Gly) + glycine + ATP = glycyl-tRNA(Gly) + AMP + diphosphate. The sequence is that of Glycine--tRNA ligase (glyQS) from Chlamydia trachomatis serovar L2 (strain ATCC VR-902B / DSM 19102 / 434/Bu).